Reading from the N-terminus, the 88-residue chain is MFGQRQSLIVYLHSLKHAKILRKYGNIHYISKRLKYAVVYCDMDQLEHMMHKLNKLPFVKRIEQSYRPFLKTEFENSRPDRAKEYDYS.

This sequence belongs to the UPF0298 family.

Its subcellular location is the cytoplasm. The protein is UPF0298 protein Bcer98_2635 of Bacillus cytotoxicus (strain DSM 22905 / CIP 110041 / 391-98 / NVH 391-98).